The primary structure comprises 468 residues: O-methyltransferase lcsG (468 aa).

The segment covering 1–12 has biased composition (polar residues); it reads MGDNVQSDTTAA. Residues 1–29 are disordered; sequence MGDNVQSDTTAAQAGITDAPTAPTSAPVS. Residues 298–299, Asp321, 348–349, and Lys363 contribute to the S-adenosyl-L-methionine site; these read GG and DF.

The protein belongs to the class I-like SAM-binding methyltransferase superfamily. Cation-independent O-methyltransferase family.

Its pathway is secondary metabolite biosynthesis. In terms of biological role, O-methyltransferase; part of the gene cluster that mediates the biosynthesis of the lipopeptide antibiotics leucinostatins that show extensive biological activities, including antimalarial, antiviral, antibacterial, antifungal, and antitumor activities, as well as phytotoxic. Leucinostatin A contains nine amino acid residues, including the unusual amino acid 4-methyl-L-proline (MePro), 2-amino-6-hydroxy-4-methyl-8-oxodecanoic acid (AHyMeOA), 3-hydroxyleucine (HyLeu), alpha-aminoisobutyric acid (AIB), beta-Ala, a 4-methylhex-2-enoic acid at the N-terminus as well as a N1,N1-dimethylpropane-1,2-diamine (DPD) at the C-terminus. The biosynthesis of leucinostatins is probably initiated with the assembly of 4-methylhex-2-enoic acid by a reducing PKS. Two reducing polyketide synthases, lcsB and lcsC, have been identified in the cluster and it is not clear which is the one that assembles 4-methylhex-2-enoic acid since both contain KS, AT, DH, cMT, ER, KR and ACP domains. The polyketide residue might be transferred to the NRPS lcsA, mediated by two additional enzymes, the acyl-CoA ligase lcsD and the thioesterase lcsE. The linear polyketide carboxylic acid, which is released from PKS, is converted to a CoA thioester by lcsD, and then lcsE hydrolyzes the thiol bond and shuttles the polyketide intermediate to lcsA. The C domain of the first module catalyzed the condensation of 4-methylhex-2-enoic acid and MePro carried by domain A1, followed by successive condensations of nine amino acids to trigger the elongation of the linear peptide. A5 and A6 domains of lcsA are proposed to incorporate leucine, A2 AHyMeOA, and A3 incorporates HyLeu. A4, A7 and A8 incorporate AIB. The AHyMeOA in leucinostatin A activated by the A2 might be produced by the second PKS (lcsB or lcsC) present within the cluster. The MePro is probably produced via leucine cyclization and may originate from a separate pathway, independent of the cluster. Another nonproteinogenic amino acid, beta-Ala, could be produced by an aspartic acid decarboxylase also localized outside of the cluster. Two candidates are VFPBJ_01400 and VFPBJ_10476. The final peptide scaffold may be released by the NAD(P)H-dependent thioester reductase (TE) at the C-terminal region of lcsA. Transamination of the lcsA product by the transaminase lcsP may produce DPD at the C-terminus. Further hydroxylation steps performed alternatively by the cytochrome P450 monooxygenases lcsI, lcsK and lcsN then yield the non-methylated leucinostatins precursor. It is also possible that leucines can be hydroxylated prior to their incorporation into the peptide. Varying extents of methylation then lead to the formation of leucinostatins A and B. The polypeptide is O-methyltransferase lcsG (Purpureocillium lilacinum (Paecilomyces lilacinus)).